Consider the following 113-residue polypeptide: Large ribosomal subunit protein bL17 (113 aa).

It belongs to the bacterial ribosomal protein bL17 family. In terms of assembly, part of the 50S ribosomal subunit. Contacts protein L32.

The chain is Large ribosomal subunit protein bL17 from Natranaerobius thermophilus (strain ATCC BAA-1301 / DSM 18059 / JW/NM-WN-LF).